We begin with the raw amino-acid sequence, 301 residues long: Homoserine O-acetyltransferase (301 aa).

The Acyl-thioester intermediate role is filled by cysteine 142. Substrate contacts are provided by lysine 163 and serine 192. Catalysis depends on histidine 235, which acts as the Proton acceptor. Residue glutamate 237 is part of the active site. Arginine 249 provides a ligand contact to substrate.

Belongs to the MetA family.

It localises to the cytoplasm. The catalysed reaction is L-homoserine + acetyl-CoA = O-acetyl-L-homoserine + CoA. The protein operates within amino-acid biosynthesis; L-methionine biosynthesis via de novo pathway; O-acetyl-L-homoserine from L-homoserine: step 1/1. Transfers an acetyl group from acetyl-CoA to L-homoserine, forming acetyl-L-homoserine. The chain is Homoserine O-acetyltransferase from Bacillus cereus (strain 03BB102).